A 67-amino-acid polypeptide reads, in one-letter code: ORF2p protein (67 aa).

Positions 13-18 are important for viral replication in intestinal cells; it reads WIGHPV. Residues 22–38 are membrane-embedded; that stretch reads AIIYPFVGFIPLSLKEV.

The protein resides in the host cytoplasmic vesicle membrane. Its function is as follows. Facilitates virus release from intestinal cells in vitro, possibly through the host autophagic pathway. The sequence is that of ORF2p protein from Homo sapiens (Human).